Here is a 199-residue protein sequence, read N- to C-terminus: FMN-dependent NADH:quinone oxidoreductase 2 (199 aa).

FMN contacts are provided by residues serine 10, 16-18 (SVS), and 96-99 (MYNF).

It belongs to the azoreductase type 1 family. As to quaternary structure, homodimer. FMN serves as cofactor.

The catalysed reaction is 2 a quinone + NADH + H(+) = 2 a 1,4-benzosemiquinone + NAD(+). It catalyses the reaction N,N-dimethyl-1,4-phenylenediamine + anthranilate + 2 NAD(+) = 2-(4-dimethylaminophenyl)diazenylbenzoate + 2 NADH + 2 H(+). In terms of biological role, quinone reductase that provides resistance to thiol-specific stress caused by electrophilic quinones. Also exhibits azoreductase activity. Catalyzes the reductive cleavage of the azo bond in aromatic azo compounds to the corresponding amines. The protein is FMN-dependent NADH:quinone oxidoreductase 2 of Pseudomonas fluorescens (strain ATCC BAA-477 / NRRL B-23932 / Pf-5).